A 435-amino-acid polypeptide reads, in one-letter code: F-box/FBD/LRR-repeat protein At5g44980 (435 aa).

An F-box domain is found at 3-49; that stretch reads RDYISELPDSLLTQILLELRTKDSVKTSVLSKRWRNLWLNVPGLELF. LRR repeat units follow at residues 88–114, 138–162, 165–190, 191–217, 250–275, and 324–349; these read CKGY…YVFM, LHNV…KLEN, HGED…ELIR, PFDI…TLHF, VKNL…DLRM, and MWSS…ILEY. An FBD domain is found at 355-405; that stretch reads REQVDFTNVPQCLISTLEYVEIKEPNEKSTIKLVNYFLENSAVLKKLTLRF.

This chain is F-box/FBD/LRR-repeat protein At5g44980, found in Arabidopsis thaliana (Mouse-ear cress).